The primary structure comprises 181 residues: Large ribosomal subunit protein uL6 (181 aa).

Belongs to the universal ribosomal protein uL6 family. In terms of assembly, part of the 50S ribosomal subunit.

Its function is as follows. This protein binds to the 23S rRNA, and is important in its secondary structure. It is located near the subunit interface in the base of the L7/L12 stalk, and near the tRNA binding site of the peptidyltransferase center. This Lawsonia intracellularis (strain PHE/MN1-00) protein is Large ribosomal subunit protein uL6.